The chain runs to 317 residues: MKVKKISPRGYCYGVVDAMKLANEAVANPDLPRPIHILGMIVHNRHVTQAFEDLGVKTVDGEDRMQALETIDRGTVVFTAHGISPLVRKRAIEKGLTIVDASCPDVLVTHDLIREKTAEGYDVIYIGKHGHPEPEGAIGVAPDHVHLIQYEHEIDQLPSRLFERKILVTNQTTMSQWDVSALIETIQARYPHVEVHNEICNATQVRQEAVAEQAGDCELLIVVGDPKSNNSNRLAQVSKEIAGTNAYRIGDLSELDLNWLEGVETVAVTSGASTPTPITKKVIDFLSQYDPDDLSTHDKTPFLELRSILPKVKALRK.

A [4Fe-4S] cluster-binding site is contributed by Cys12. (2E)-4-hydroxy-3-methylbut-2-enyl diphosphate is bound by residues His43 and His81. Dimethylallyl diphosphate-binding residues include His43 and His81. Isopentenyl diphosphate-binding residues include His43 and His81. Residue Cys103 participates in [4Fe-4S] cluster binding. His131 lines the (2E)-4-hydroxy-3-methylbut-2-enyl diphosphate pocket. His131 provides a ligand contact to dimethylallyl diphosphate. His131 serves as a coordination point for isopentenyl diphosphate. Glu133 acts as the Proton donor in catalysis. Thr172 is a (2E)-4-hydroxy-3-methylbut-2-enyl diphosphate binding site. Residue Cys200 coordinates [4Fe-4S] cluster. Ser228, Asn230, and Ser273 together coordinate (2E)-4-hydroxy-3-methylbut-2-enyl diphosphate. Residues Ser228, Asn230, and Ser273 each coordinate dimethylallyl diphosphate. Ser228, Asn230, and Ser273 together coordinate isopentenyl diphosphate.

Belongs to the IspH family. [4Fe-4S] cluster serves as cofactor.

The enzyme catalyses isopentenyl diphosphate + 2 oxidized [2Fe-2S]-[ferredoxin] + H2O = (2E)-4-hydroxy-3-methylbut-2-enyl diphosphate + 2 reduced [2Fe-2S]-[ferredoxin] + 2 H(+). The catalysed reaction is dimethylallyl diphosphate + 2 oxidized [2Fe-2S]-[ferredoxin] + H2O = (2E)-4-hydroxy-3-methylbut-2-enyl diphosphate + 2 reduced [2Fe-2S]-[ferredoxin] + 2 H(+). It participates in isoprenoid biosynthesis; dimethylallyl diphosphate biosynthesis; dimethylallyl diphosphate from (2E)-4-hydroxy-3-methylbutenyl diphosphate: step 1/1. Its pathway is isoprenoid biosynthesis; isopentenyl diphosphate biosynthesis via DXP pathway; isopentenyl diphosphate from 1-deoxy-D-xylulose 5-phosphate: step 6/6. Its function is as follows. Catalyzes the conversion of 1-hydroxy-2-methyl-2-(E)-butenyl 4-diphosphate (HMBPP) into a mixture of isopentenyl diphosphate (IPP) and dimethylallyl diphosphate (DMAPP). Acts in the terminal step of the DOXP/MEP pathway for isoprenoid precursor biosynthesis. This is 4-hydroxy-3-methylbut-2-enyl diphosphate reductase from Exiguobacterium sp. (strain ATCC BAA-1283 / AT1b).